Reading from the N-terminus, the 247-residue chain is MDDIRKIERLAAASWPAYFQKSIGKWLLRANFGVTKRANSVWTSADMPEGDFQLEAELFYQSLGLPVCFHISNASPKGLDDALADSRYEKVDECFQMTALCRSIMSRTNDNSRFTYKWEQEPSSVWIDEFIQLEGFSPERHKGYKHIFERMPPCKTFFKMYDKESLTALGTVSVIDGYGGLSNIVVAEEHRGKGAGTQVIRVLTEWAKNNGAERMFLQVMKENLAAVSLYGKIGFSPISEHHYRIKR.

The region spanning 102-247 is the N-acetyltransferase domain; the sequence is RSIMSRTNDN…ISEHHYRIKR (146 aa).

This sequence belongs to the acetyltransferase family.

This is an uncharacterized protein from Bacillus subtilis (strain 168).